We begin with the raw amino-acid sequence, 688 residues long: Coiled-coil domain-containing protein 157 (688 aa).

Positions Ala143–Pro153 are enriched in polar residues. Disordered stretches follow at residues Ala143 to Ser162, Ala168 to Ser189, Gln322 to Arg341, Gln366 to Ala385, and Gln592 to Thr688. Positions Lys288–Gln572 form a coiled coil. The segment covering Glu369–Gln382 has biased composition (polar residues). Low complexity predominate over residues Ser671–Ala680.

The chain is Coiled-coil domain-containing protein 157 (CCDC157) from Bos taurus (Bovine).